The chain runs to 379 residues: uncharacterized protein (379 aa).

This is an uncharacterized protein from Tortricidae (ClGV).